Reading from the N-terminus, the 454-residue chain is COBRA-like protein 6 (454 aa).

The N-terminal stretch at 1-24 is a signal peptide; it reads MGAMLNLLLVVTVILCSILSPTRF. N-linked (GlcNAc...) asparagine glycans are attached at residues Asn-104, Asn-191, Asn-320, Asn-355, and Asn-391. A lipid anchor (GPI-anchor amidated serine) is attached at Ser-429. Residues 430 to 454 constitute a propeptide, removed in mature form; the sequence is SSSSAVISSVSVVFCFLLHHLLLLV.

This sequence belongs to the COBRA family. In terms of tissue distribution, expressed in flowers and siliques.

It localises to the cell membrane. This is COBRA-like protein 6 (COBL6) from Arabidopsis thaliana (Mouse-ear cress).